Consider the following 106-residue polypeptide: NADH dehydrogenase [ubiquinone] iron-sulfur protein 5 (106 aa).

One can recognise a CHCH domain in the interval 30–74; that stretch reads AGRCHAFEKEWIECAHGIGYTRAEKECKIEYDDFVECLLRQKTMR. 2 short sequence motifs (cx9C motif) span residues 33–43 and 56–66; these read CHAFEKEWIEC and CKIEYDDFVEC. Cystine bridges form between cysteine 33-cysteine 66 and cysteine 43-cysteine 56. Positions 84–106 are disordered; sequence DKLIKEGKYTPPPHHIGKGEPRP.

The protein belongs to the complex I NDUFS5 subunit family. In terms of assembly, mammalian complex I is composed of 45 different subunits. This is a component of the iron-sulfur (IP) fragment of the enzyme.

Its subcellular location is the mitochondrion inner membrane. It localises to the mitochondrion intermembrane space. Its function is as follows. Accessory subunit of the mitochondrial membrane respiratory chain NADH dehydrogenase (Complex I), that is believed not to be involved in catalysis. Complex I functions in the transfer of electrons from NADH to the respiratory chain. The immediate electron acceptor for the enzyme is believed to be ubiquinone. The protein is NADH dehydrogenase [ubiquinone] iron-sulfur protein 5 (NDUFS5) of Homo sapiens (Human).